Here is a 359-residue protein sequence, read N- to C-terminus: Lipopolysaccharide 1,6-galactosyltransferase (359 aa).

The UDP site is built by Q242 and E274.

It belongs to the glycosyltransferase group 1 family. Glycosyltransferase 4 subfamily.

The enzyme catalyses alpha-D-Glc-(1-&gt;3)-[L-alpha-D-Hep-(1-&gt;7)]-4-O-PO3(2-)-L-alpha-D-Hep-(1-&gt;3)-4-O-PO3(2-)-L-alpha-D-Hep-(1-&gt;5)-[alpha-Kdo-(2-&gt;4)]-alpha-Kdo-(2-&gt;6)-lipid A + UDP-alpha-D-galactose = alpha-D-Gal-(1-&gt;6)-alpha-D-Glc-(1-&gt;3)-[L-alpha-D-Hep-(1-&gt;7)]-4-O-PO3(2-)-L-alpha-D-Hep-(1-&gt;3)-4-O-PO3(2-)-L-alpha-D-Hep-(1-&gt;5)-[alpha-Kdo-(2-&gt;4)]-alpha-Kdo-(2-&gt;6)-lipid A + UDP + H(+). Its pathway is bacterial outer membrane biogenesis; LPS core biosynthesis. Galactosyltransferase involved in the biosynthesis of the core oligosaccharide region of lipopolysaccharide (LPS). Catalyzes the addition of galactose from UDP-galactose to the first glucose residue of the LPS outer core. Cannot use other sugar donors, such as UDP-glucose, UDP-glucuronic acid, UDP-galacuronic acid, GDP-mannose, ADP-glucose and GDP-glucose. In the absence of a lipid acceptor, can hydrolyze UDP-galactose to UDP and galactose. The polypeptide is Lipopolysaccharide 1,6-galactosyltransferase (Escherichia coli (strain K12)).